Here is a 289-residue protein sequence, read N- to C-terminus: MNEKKERIIKTSIRLFAKKGFAATTIQEIASECGISKGAFYLHFKSKEALLLSACEYYIGMSMNKMKNIEEDLAGKPPKEVLKKQIGAQFEDFRDHKDFIVLLLTENIIPENQEIKQYFYKVTMETDKLYRNALLVSYGEGIERYVADLSIMARGIVHSYMNVMVFNGELNIDAEEISAFIIERLDDLVQGLSRSALNPIVSKDIFNPMPAGKDQLLEDIQKVKENSTLPEDITVSLDVIEEELTQDKPRKPIIKGMLSNLAGTNDKEVERLRALILSLSQFDHKKSSL.

Residues 2-62 (NEKKERIIKT…SACEYYIGMS (61 aa)) enclose the HTH tetR-type domain. The H-T-H motif DNA-binding region spans 25–44 (TIQEIASECGISKGAFYLHF).

This is an uncharacterized protein from Bacillus subtilis (strain 168).